Consider the following 223-residue polypeptide: MRTLTVHYLGQIAYTAAWDIQRQLAAERSRGQIGDTLLLLEHPPTITLGNKARPDHVLASPAELAARGVAVVQSDRGGEVTYHAPGQLVAYPIFKLSQHGSDVGRYVRGLEESVIRVLAGYGLVGERVAGLTGVWVRNGAAKICAIGVKLSASGVTTHGLALNVDPDLSGFDLIVPCGITDRSVTSLAFELGQAPALAEVAERLIAQIGEVFALEPRVEALAM.

One can recognise a BPL/LPL catalytic domain in the interval 31-216 (GQIGDTLLLL…QIGEVFALEP (186 aa)). Substrate contacts are provided by residues 76–83 (RGGEVTYH), 145–147 (AIG), and 159–161 (GLA). The active-site Acyl-thioester intermediate is Cys-177.

It belongs to the LipB family.

It is found in the cytoplasm. It catalyses the reaction octanoyl-[ACP] + L-lysyl-[protein] = N(6)-octanoyl-L-lysyl-[protein] + holo-[ACP] + H(+). It functions in the pathway protein modification; protein lipoylation via endogenous pathway; protein N(6)-(lipoyl)lysine from octanoyl-[acyl-carrier-protein]: step 1/2. In terms of biological role, catalyzes the transfer of endogenously produced octanoic acid from octanoyl-acyl-carrier-protein onto the lipoyl domains of lipoate-dependent enzymes. Lipoyl-ACP can also act as a substrate although octanoyl-ACP is likely to be the physiological substrate. The polypeptide is Octanoyltransferase (Chloroflexus aurantiacus (strain ATCC 29366 / DSM 635 / J-10-fl)).